Here is a 37-residue protein sequence, read N- to C-terminus: Large ribosomal subunit protein bL36 (37 aa).

It belongs to the bacterial ribosomal protein bL36 family.

The sequence is that of Large ribosomal subunit protein bL36 from Alkaliphilus oremlandii (strain OhILAs) (Clostridium oremlandii (strain OhILAs)).